A 440-amino-acid polypeptide reads, in one-letter code: MLNCSNQKHTVTFEEACQVFPGGVNSPVRACRSVGVTPPIVSSAQGDIFLDTHGREFIDFCGGWGALIHGHSHPKIVKAIQKTALKGTSYGLTSEEEILFATMLLSSLKLKEHKIRFVSSGTEATMTAVRLARGITNRSIIIKFIGGYHGHADTLLGGISTTEETIDNLTSLIHTPSPHSLLISLPYNNSQILHHVMEALGPQVAGIIFEPICANMGIVLPKAEFLDDIIELCKRFGSLSIMDEVVTGFRVAFQGAKDIFNLSPDITIYGKILGGGLPAAALVGHRSILDHLMPEGTIFQAGTMSGNFLAMATGHAAIQLCQSEGFYDHLSQLEALFYSPIEEEIRSQGFPVSLVHQGTMFSLFFTESAPTNFDEAKNSDVEKFQTFYSEVFDNGVYLSPSPLEANFISSAHTEENLTYAQNIIIDSLIKIFDSSAQRFF.

Lys-271 carries the N6-(pyridoxal phosphate)lysine modification.

It belongs to the class-III pyridoxal-phosphate-dependent aminotransferase family. HemL subfamily. As to quaternary structure, homodimer. The cofactor is pyridoxal 5'-phosphate.

Its subcellular location is the cytoplasm. It catalyses the reaction (S)-4-amino-5-oxopentanoate = 5-aminolevulinate. Its pathway is porphyrin-containing compound metabolism; protoporphyrin-IX biosynthesis; 5-aminolevulinate from L-glutamyl-tRNA(Glu): step 2/2. This chain is Glutamate-1-semialdehyde 2,1-aminomutase, found in Chlamydia pneumoniae (Chlamydophila pneumoniae).